The following is a 432-amino-acid chain: Ornithine decarboxylase, chloroplastic (432 aa).

Lys-95 carries the post-translational modification N6-(pyridoxal phosphate)lysine. Residues Ser-227, Gly-265, and 298-301 contribute to the pyridoxal 5'-phosphate site; that span reads EPGR. Substrate is bound at residue 341 to 342; sequence YD. The active-site Proton donor; shared with dimeric partner is Cys-377. Asp-378 contacts substrate. Tyr-406 contributes to the pyridoxal 5'-phosphate binding site.

It belongs to the Orn/Lys/Arg decarboxylase class-II family. In terms of assembly, homodimer. Only the dimer is catalytically active, as the active sites are constructed of residues from both monomers. Requires pyridoxal 5'-phosphate as cofactor.

It is found in the plastid. The protein localises to the chloroplast. The catalysed reaction is L-lysine + H(+) = cadaverine + CO2. It carries out the reaction L-ornithine + H(+) = putrescine + CO2. Its pathway is alkaloid biosynthesis; nicotine biosynthesis. It functions in the pathway amine and polyamine biosynthesis; putrescine biosynthesis via L-ornithine pathway; putrescine from L-ornithine: step 1/1. Repressed by alpha-difluoromethylornithine (DFMO), 5,5'-dithiobis-(2-nitrobenzoic acid) (DTNB) and salicylaldehyde. Its function is as follows. Involved in the biosynthesis of pyridine alkaloid natural products, leading mainly to the production of anabasine, anatabine, nicotine and nornicotine, effective deterrents against herbivores with antiparasitic and pesticide properties (neurotoxins); nornicotine serves as the precursor in the synthesis of the carcinogen compound N'-nitrosonornicotine (NNN). Catalyzes the first and rate-limiting step of polyamine biosynthesis that converts ornithine into putrescine, which is the precursor for the polyamines, spermidine and spermine. Can also use, with a lower efficiency, L-lysine as substrate to produce cadaverine. Polyamines are essential for cell proliferation and are implicated in cellular processes, ranging from DNA replication to apoptosis. This is Ornithine decarboxylase, chloroplastic from Nicotiana glutinosa (Tobacco).